We begin with the raw amino-acid sequence, 288 residues long: Fibroblast growth factor 2 (288 aa).

Positions 1 to 142 (MVGVGGGDVE…TMAAGSITTL (142 aa)) are excised as a propeptide. A disordered region spans residues 1 to 156 (MVGVGGGDVE…EDGGSGAFPP (156 aa)). A compositionally biased stretch (basic and acidic residues) spans 72–84 (ERPSGSRLGDHGR). Omega-N-methylarginine; alternate is present on residues Arg108, Arg110, and Arg112. Arg108, Arg110, and Arg112 each carry symmetric dimethylarginine; alternate. A compositionally biased stretch (low complexity) spans 113–132 (GTAAPRAAPAARGSRPGPAG). Position 169 (Asn169) interacts with heparin. A Cell attachment site; atypical motif is present at residues 179-181 (DGR). Tyr215 is modified (phosphotyrosine; by TEC). Positions 221–223 (DGR) match the Cell attachment site; atypical motif. Lys228 participates in a covalent cross-link: Glycyl lysine isopeptide (Lys-Gly) (interchain with G-Cter in SUMO1). Residues 261-277 (KRTGQYKLGSKTGPGQK) are heparin-binding.

This sequence belongs to the heparin-binding growth factors family. As to quaternary structure, monomer. Homodimer. Interacts with FGFR1, FGFR2, FGFR3 and FGFR4. Affinity between fibroblast growth factors (FGFs) and their receptors is increased by heparan sulfate glycosaminoglycans that function as coreceptors. Interacts with CSPG4, FGFBP1 and TEC. Found in a complex with FGFBP1, FGF1 and FGF2. Interacts with FGFBP3. Interacts with integrin ITGAV:ITGB3; the interaction is required for FGF2 signaling. Interacts with SNORC (via the extracellular domain). Interacts with glypican GPC3. In terms of processing, phosphorylation at Tyr-215 regulates FGF2 unconventional secretion.

The protein resides in the secreted. Its subcellular location is the nucleus. Functionally, acts as a ligand for FGFR1, FGFR2, FGFR3 and FGFR4. Also acts as an integrin ligand which is required for FGF2 signaling. Binds to integrin ITGAV:ITGB3. Plays an important role in the regulation of cell survival, cell division, cell differentiation and cell migration. Functions as a potent mitogen in vitro. Can induce angiogenesis. Mediates phosphorylation of ERK1/2 and thereby promotes retinal lens fiber differentiation. This chain is Fibroblast growth factor 2, found in Pan troglodytes (Chimpanzee).